The sequence spans 399 residues: Elongation factor Tu (399 aa).

In terms of domain architecture, tr-type G spans 10 to 209 (KPHVNIGTIG…AVDEYIPTPE (200 aa)). Residues 19–26 (GHVDHGKT) are G1. Residue 19–26 (GHVDHGKT) coordinates GTP. Mg(2+) is bound at residue Thr26. The tract at residues 60–64 (GITIA) is G2. The segment at 81–84 (DCPG) is G3. Residues 81–85 (DCPGH) and 136–139 (NKED) each bind GTP. A G4 region spans residues 136–139 (NKED). Positions 174 to 176 (SAL) are G5.

This sequence belongs to the TRAFAC class translation factor GTPase superfamily. Classic translation factor GTPase family. EF-Tu/EF-1A subfamily. As to quaternary structure, monomer.

It localises to the cytoplasm. The enzyme catalyses GTP + H2O = GDP + phosphate + H(+). In terms of biological role, GTP hydrolase that promotes the GTP-dependent binding of aminoacyl-tRNA to the A-site of ribosomes during protein biosynthesis. The chain is Elongation factor Tu from Nitratiruptor sp. (strain SB155-2).